Reading from the N-terminus, the 665-residue chain is ATPase WRNIP1 (665 aa).

Residues 17–44 (QVQCPVCQQMMPAAHINSHLDRCLLLHP) form a UBZ4-type zinc finger. Residues Cys20, Cys23, His31, His35, and Cys39 each coordinate Zn(2+). Residues 48–190 (AEPAAGSHRA…DGEDDPGHWD (143 aa)) form a disordered region. Phosphoserine is present on residues Ser65 and Ser75. The span at 76 to 89 (ESSALKQPATPTAA) shows a compositional bias: polar residues. Residue Lys81 forms a Glycyl lysine isopeptide (Lys-Gly) (interchain with G-Cter in ubiquitin) linkage. Residue Thr85 is modified to Phosphothreonine. A phosphoserine mark is found at Ser91 and Ser92. A compositionally biased stretch (acidic residues) spans 92 to 104 (SEGEGEEGDDGGE). Residue Thr116 is modified to Phosphothreonine. The segment covering 130–155 (RSSSPGRKGSGKRPAAAAAAGSASPR) has biased composition (low complexity). Ser139 carries the post-translational modification Phosphoserine. A Glycyl lysine isopeptide (Lys-Gly) (interchain with G-Cter in ubiquitin) cross-link involves residue Lys141. At Ser153 the chain carries Phosphoserine. Residues 159–184 (EAEAQEEEEAVGDGDGDGDADADGED) show a composition bias toward acidic residues. Lys225 is covalently cross-linked (Glycyl lysine isopeptide (Lys-Gly) (interchain with G-Cter in ubiquitin)). 270-276 (PGCGKTT) contributes to the ATP binding site. Residues Lys301, Lys310, Lys316, Lys322, and Lys335 each participate in a glycyl lysine isopeptide (Lys-Gly) (interchain with G-Cter in ubiquitin) cross-link. Residue Lys482 forms a Glycyl lysine isopeptide (Lys-Gly) (interchain with G-Cter in SUMO2); alternate linkage. Residue Lys482 forms a Glycyl lysine isopeptide (Lys-Gly) (interchain with G-Cter in ubiquitin); alternate linkage. Phosphotyrosine is present on residues Tyr534 and Tyr562. A Glycyl lysine isopeptide (Lys-Gly) (interchain with G-Cter in ubiquitin) cross-link involves residue Lys627. A Glycyl lysine isopeptide (Lys-Gly) (interchain with G-Cter in ubiquitin); alternate cross-link involves residue Lys633. An N6-acetyllysine; alternate modification is found at Lys633. A Glycyl lysine isopeptide (Lys-Gly) (interchain with G-Cter in ubiquitin) cross-link involves residue Lys636.

It belongs to the AAA ATPase family. RarA/MGS1/WRNIP1 subfamily. As to quaternary structure, forms homooligomers, possibly octamers. Directly interacts with POLD1, POLD2 and POLD4. Interacts with the N-terminal domain of WRN. Interacts (via UBZ4-type zinc finger) with monoubiquitin and polyubiquitin. Interacts with TRIM14 and PPP6C; these interactions positively regulate the RIGI signaling pathway. In terms of processing, sumoylated with SUMO1 and SUMO2/3. As to expression, ubiquitously expressed.

Its subcellular location is the nucleus. The protein resides in the cytoplasm. The enzyme catalyses ATP + H2O = ADP + phosphate + H(+). Functions as a modulator of initiation or reinitiation events during DNA polymerase delta-mediated DNA synthesis. In the presence of ATP, stimulation of DNA polymerase delta-mediated DNA synthesis is decreased. Also plays a role in the innate immune defense against viruses. Stabilizes the RIGI dsRNA interaction and promotes RIGI 'Lys-63'-linked polyubiquitination. In turn, RIGI transmits the signal through mitochondrial MAVS. The protein is ATPase WRNIP1 of Homo sapiens (Human).